A 129-amino-acid polypeptide reads, in one-letter code: uncharacterized protein (129 aa).

This sequence belongs to the asfivirus C129R family.

The protein resides in the virion. In terms of biological role, plays a role in the inhibition of type I interferon signaling pathway. Mechanistically, specifically interacts with 2',3'-cGAMP and cleaves it via its phosphodiesterase activity. In turn, prevents 2',3'-cGAMP interaction with host ER-resident STING1 leading to inhibition of downstream signaling pathway and type I interferon production. This is an uncharacterized protein from African swine fever virus (strain Badajoz 1971 Vero-adapted) (Ba71V).